The following is a 120-amino-acid chain: Glycine cleavage system H protein (120 aa).

A Lipoyl-binding domain is found at 17–99; that stretch reads VATVGITAHA…QGAGWLYRLK (83 aa). Lysine 58 bears the N6-lipoyllysine mark.

It belongs to the GcvH family. The glycine cleavage system is composed of four proteins: P, T, L and H. It depends on (R)-lipoate as a cofactor.

The glycine cleavage system catalyzes the degradation of glycine. The H protein shuttles the methylamine group of glycine from the P protein to the T protein. This is Glycine cleavage system H protein from Methylorubrum populi (strain ATCC BAA-705 / NCIMB 13946 / BJ001) (Methylobacterium populi).